The chain runs to 470 residues: Hydroxymethylglutaryl-CoA synthase (470 aa).

The active-site Proton donor/acceptor is glutamate 100. Cysteine 134 (acyl-thioester intermediate) is an active-site residue. (3S)-3-hydroxy-3-methylglutaryl-CoA is bound by residues cysteine 134, threonine 176, serine 225, histidine 269, lysine 278, asparagine 348, and serine 382. Catalysis depends on histidine 269, which acts as the Proton donor/acceptor.

Belongs to the thiolase-like superfamily. HMG-CoA synthase family.

It catalyses the reaction acetoacetyl-CoA + acetyl-CoA + H2O = (3S)-3-hydroxy-3-methylglutaryl-CoA + CoA + H(+). Its pathway is metabolic intermediate biosynthesis; (R)-mevalonate biosynthesis; (R)-mevalonate from acetyl-CoA: step 2/3. Its function is as follows. Hydroxymethylglutaryl-CoA synthase; part of the first module of ergosterol biosynthesis pathway that includes the early steps of the pathway, conserved across all eukaryotes, and which results in the formation of mevalonate from acetyl-coenzyme A (acetyl-CoA). This module also plays a key role in the biosynthesis of triterpenes such as ganoderic acids (GA), a group of highly oxygenated lanostane-type triterpenoids which are well recognized as a main group of unique bioactive compounds in the medicinal mushroom Ganoderma lucidum. In this module, the acetyl-CoA acetyltransferase catalyzes the formation of acetoacetyl-CoA. The hydroxymethylglutaryl-CoA synthase HMGS then condenses acetyl-CoA with acetoacetyl-CoA to form HMG-CoA. The rate-limiting step of the early module is the reduction to mevalonate by the 3-hydroxy-3-methylglutaryl-coenzyme A (HMG-CoA) reductase. This is Hydroxymethylglutaryl-CoA synthase from Ganoderma lucidum (Ling zhi medicinal fungus).